The primary structure comprises 554 residues: Glutamine--tRNA ligase (554 aa).

A 'HIGH' region motif is present at residues 33–43 (PEPNGYLHIGH). ATP contacts are provided by residues 34 to 36 (EPN) and 40 to 46 (HIGHAKS). L-glutamine contacts are provided by D66 and Y210. ATP contacts are provided by residues T229, 259-260 (RL), and 267-269 (MSK). The short motif at 266–270 (VMSKR) is the 'KMSKS' region element.

Belongs to the class-I aminoacyl-tRNA synthetase family. As to quaternary structure, monomer.

The protein resides in the cytoplasm. It carries out the reaction tRNA(Gln) + L-glutamine + ATP = L-glutaminyl-tRNA(Gln) + AMP + diphosphate. This Clostridioides difficile (strain 630) (Peptoclostridium difficile) protein is Glutamine--tRNA ligase.